We begin with the raw amino-acid sequence, 476 residues long: Hyaluronidase-2 (476 aa).

The signal sequence occupies residues 1-20 (MWTGLGPAVTLALVLVVAWA). 2 disulfides stabilise this stretch: Cys47/Cys343 and Cys214/Cys230. N-linked (GlcNAc...) asparagine glycans are attached at residues Asn77 and Asn106. The active-site Proton donor is the Glu138. Residues Asn340 and Asn360 are each glycosylated (N-linked (GlcNAc...) asparagine). One can recognise an EGF-like domain in the interval 364–442 (AAQYCSWAQC…YLGWGGEQCQ (79 aa)). Intrachain disulfides connect Cys368–Cys379, Cys373–Cys430, and Cys432–Cys441. Residue Gly451 is the site of GPI-anchor amidated glycine attachment. A propeptide spans 452–476 (ASGAWAGSHLTGLLAVAVLAFTWTS) (removed in mature form).

The protein belongs to the glycosyl hydrolase 56 family. In terms of assembly, interacts with MST1R. (Microbial infection) Interacts with Jaagsiekte sheep retrovirus (JSRV) envelope proteins.

The protein localises to the cell membrane. It carries out the reaction Random hydrolysis of (1-&gt;4)-linkages between N-acetyl-beta-D-glucosamine and D-glucuronate residues in hyaluronate.. Catalyzes hyaluronan degradation into small fragments that are endocytosed and degraded in lysosomes by HYAL1 and exoglycosidases. Essential for the breakdown of extracellular matrix hyaluronan. This Ovis aries (Sheep) protein is Hyaluronidase-2 (HYAL2).